A 150-amino-acid chain; its full sequence is Large ribosomal subunit protein bL9 (150 aa).

This sequence belongs to the bacterial ribosomal protein bL9 family.

In terms of biological role, binds to the 23S rRNA. This Arthrobacter sp. (strain FB24) protein is Large ribosomal subunit protein bL9.